The chain runs to 334 residues: UDP-glucose 4-epimerase (334 aa).

NAD(+) contacts are provided by residues 11–12 (YI), 31–36 (DNLQKG), 50–51 (DI), 72–76 (FAANS), asparagine 91, threonine 116, tyrosine 140, lysine 144, and phenylalanine 168. Substrate contacts are provided by threonine 116 and tyrosine 140. Residue tyrosine 140 is the Proton acceptor of the active site. Substrate contacts are provided by residues asparagine 169, 188–189 (HL), 205–207 (AIF), arginine 220, and 281–284 (RSGD).

It belongs to the NAD(P)-dependent epimerase/dehydratase family. Homodimer. NAD(+) is required as a cofactor.

The catalysed reaction is UDP-alpha-D-glucose = UDP-alpha-D-galactose. It participates in carbohydrate metabolism; galactose metabolism. Its function is as follows. Involved in the metabolism of galactose. Catalyzes the conversion of UDP-galactose (UDP-Gal) to UDP-glucose (UDP-Glc) through a mechanism involving the transient reduction of NAD. This is UDP-glucose 4-epimerase (galE) from Halalkalibacterium halodurans (strain ATCC BAA-125 / DSM 18197 / FERM 7344 / JCM 9153 / C-125) (Bacillus halodurans).